Reading from the N-terminus, the 484-residue chain is Argininosuccinate lyase (484 aa).

This sequence belongs to the lyase 1 family. Argininosuccinate lyase subfamily.

It localises to the cytoplasm. It catalyses the reaction 2-(N(omega)-L-arginino)succinate = fumarate + L-arginine. Its pathway is amino-acid biosynthesis; L-arginine biosynthesis; L-arginine from L-ornithine and carbamoyl phosphate: step 3/3. The polypeptide is Argininosuccinate lyase (Methanocaldococcus jannaschii (strain ATCC 43067 / DSM 2661 / JAL-1 / JCM 10045 / NBRC 100440) (Methanococcus jannaschii)).